Consider the following 253-residue polypeptide: 3-deoxy-manno-octulosonate cytidylyltransferase (253 aa).

It belongs to the KdsB family.

The protein resides in the cytoplasm. It carries out the reaction 3-deoxy-alpha-D-manno-oct-2-ulosonate + CTP = CMP-3-deoxy-beta-D-manno-octulosonate + diphosphate. It participates in nucleotide-sugar biosynthesis; CMP-3-deoxy-D-manno-octulosonate biosynthesis; CMP-3-deoxy-D-manno-octulosonate from 3-deoxy-D-manno-octulosonate and CTP: step 1/1. Its pathway is bacterial outer membrane biogenesis; lipopolysaccharide biosynthesis. Functionally, activates KDO (a required 8-carbon sugar) for incorporation into bacterial lipopolysaccharide in Gram-negative bacteria. The chain is 3-deoxy-manno-octulosonate cytidylyltransferase from Aeromonas hydrophila subsp. hydrophila (strain ATCC 7966 / DSM 30187 / BCRC 13018 / CCUG 14551 / JCM 1027 / KCTC 2358 / NCIMB 9240 / NCTC 8049).